A 72-amino-acid chain; its full sequence is UPF0154 protein EF_1734 (72 aa).

The helical transmembrane segment at 4 to 26 (GWVVLIAVIALLVGAAGGFFLAR) threads the bilayer.

Belongs to the UPF0154 family.

It localises to the membrane. The protein is UPF0154 protein EF_1734 of Enterococcus faecalis (strain ATCC 700802 / V583).